The chain runs to 326 residues: Vomeronasal type-1 receptor 94 (326 aa).

At 1 to 32 (MSEILLFSPQPLFSYTMNKYSRLYTNSNIRNT) the chain is on the extracellular side. A helical transmembrane segment spans residues 33–53 (FFSEIGIGIAANSLLLLFHIF). The Cytoplasmic segment spans residues 54–65 (KFIRGQRSRLTD). The helical transmembrane segment at 66–86 (LPIGLLSLIHLLKLLMIAFIA) threads the bilayer. Over 87–110 (TDIFISWRGWDDIICKFLVYLYRS) the chain is Extracellular. An intrachain disulfide couples C101 to C188. A helical membrane pass occupies residues 111–130 (FRGLSLCTTCMLSVLQAITL). Residues 131-150 (SPRSSCLAKFKHKSPHHVSC) are Cytoplasmic-facing. Residues 151 to 171 (AILSLSVLYMFISSHLLVSLI) form a helical membrane-spanning segment. At 172–203 (ATPNLTTNVFMYVSESCSILPMSYLMQSMFST) the chain is on the extracellular side. N-linked (GlcNAc...) asparagine glycosylation is present at N175. Residues 204–224 (LLAIRDVFLISLMVLSTCYMV) traverse the membrane as a helical segment. The Cytoplasmic portion of the chain corresponds to 225-254 (ALLCRHRKQTRHLQGTSLSPKASPEKKATH). The helical transmembrane segment at 255-275 (SILMLMSFFVLMSILDSIVSC) threads the bilayer. Residues 276-285 (SRTMFLYDPT) are Extracellular-facing. The chain crosses the membrane as a helical span at residues 286–306 (SYAIQIFVSHIYATVSPFVFM). At 307–326 (SNEKHIVNFLRSLCKRVINV) the chain is on the cytoplasmic side.

It belongs to the G-protein coupled receptor 1 family.

It localises to the cell membrane. Putative pheromone receptor implicated in the regulation of social as well as reproductive behavior. The polypeptide is Vomeronasal type-1 receptor 94 (Vom1r94) (Rattus norvegicus (Rat)).